Reading from the N-terminus, the 331-residue chain is Ferrochelatase (331 aa).

Positions 187 and 286 each coordinate Fe cation.

Belongs to the ferrochelatase family.

It localises to the cytoplasm. The catalysed reaction is heme b + 2 H(+) = protoporphyrin IX + Fe(2+). It functions in the pathway porphyrin-containing compound metabolism; protoheme biosynthesis; protoheme from protoporphyrin-IX: step 1/1. Its function is as follows. Catalyzes the ferrous insertion into protoporphyrin IX. In Legionella pneumophila (strain Corby), this protein is Ferrochelatase.